We begin with the raw amino-acid sequence, 208 residues long: Uracil phosphoribosyltransferase (208 aa).

Residues Arg-78, Arg-103, and 130–138 (DPMLATGGS) each bind 5-phospho-alpha-D-ribose 1-diphosphate. Uracil contacts are provided by residues Ile-193 and 198–200 (GDA). Asp-199 serves as a coordination point for 5-phospho-alpha-D-ribose 1-diphosphate.

This sequence belongs to the UPRTase family. Mg(2+) is required as a cofactor.

The catalysed reaction is UMP + diphosphate = 5-phospho-alpha-D-ribose 1-diphosphate + uracil. It functions in the pathway pyrimidine metabolism; UMP biosynthesis via salvage pathway; UMP from uracil: step 1/1. Allosterically activated by GTP. Catalyzes the conversion of uracil and 5-phospho-alpha-D-ribose 1-diphosphate (PRPP) to UMP and diphosphate. This is Uracil phosphoribosyltransferase from Pectobacterium carotovorum subsp. carotovorum (strain PC1).